The sequence spans 634 residues: Ankyrin repeat protein OPG025 (634 aa).

ANK repeat units lie at residues 36–69 (DGETPLKAYVTKKNNNIKNDVVILLLSSVDYKNI), 70–100 (NDFDIFEYLCSDNIDIDLLKLLISKGIEINS), 103–134 (NGINIVEKYATTSNPNVDVFKLLLDKGIPTCS), 175–211 (MGKTVLYYYIITRSQDGYATSLDVINYLISHKKEMRY), 307–337 (IQDLLLEYVSYHTVYINVIKCMIDEGATLYR), and 412–441 (HGCSILYHCIKSHSVSLVEWLIDNGADINI).

Belongs to the orthopoxvirus OPG025 family. In terms of assembly, interacts with components of host SCF complex CUL1 and SKP1 and components of the cullin deneddylation/COP9 signalosome complex subunits COPS7A and COPS7B.

Functionally, plays a role in the inhibition of host immune repsonse by counteracting the action of interferons on early events in the viral replication cycle. The protein is Ankyrin repeat protein OPG025 (OPG025) of Vaccinia virus (strain Copenhagen) (VACV).